Reading from the N-terminus, the 386-residue chain is Putative gustatory receptor 22b (386 aa).

At 1-48 the chain is on the cytoplasmic side; sequence MFGSSREIRPYLARQMLKTTLYGSWLLGIFPFTLDSGKRIRQLRRSRC. Residues 49-69 traverse the membrane as a helical segment; it reads LTLYGLVLNYFLIFTLIRLAF. Topologically, residues 70–89 are extracellular; the sequence is EYRKHKLEAFKRNPVLEMIN. Residues 90–110 traverse the membrane as a helical segment; it reads VVIGIINVLSALIVHFMNFWG. The Cytoplasmic portion of the chain corresponds to 111–155; that stretch reads SRKVGEICNELLILEYQDFEGLNGRNCPNFNCFVIQKCLTILGQL. A helical transmembrane segment spans residues 156–176; it reads LSFFTLNFALPGLEFHICLVL. Topologically, residues 177–178 are extracellular; it reads LS. Residues 179 to 199 traverse the membrane as a helical segment; it reads CLMEFSLNLNIMHYHVGVLLI. Topologically, residues 200 to 254 are cytoplasmic; sequence YRYVWLINEQLKDLVSQLKLNPETDFSRIHQFLSLYKRLLELNRKLVIAYEYQMT. The chain crosses the membrane as a helical span at residues 255 to 275; it reads LFIIAQLSGNIVVIYFLIVYG. Topologically, residues 276 to 282 are extracellular; that stretch reads LSMRTYS. Residues 283 to 303 form a helical membrane-spanning segment; that stretch reads IFLVAFPNSLLINIWDFWLCI. Over 304–363 the chain is Cytoplasmic; that stretch reads AACDLTEKAGDETAIILKIFSDLEHRDDKLEMSVNEFAWLCSHRKFRFQLCGLFSMNCRM. Residues 364–384 traverse the membrane as a helical segment; sequence GFKMIITTFLYLVYLVQFDYM. Over 385–386 the chain is Extracellular; that stretch reads NL.

This sequence belongs to the insect chemoreceptor superfamily. Gustatory receptor (GR) family. Gr22e subfamily. As to expression, expressed in taste bristles in the foreleg and labial palps. In larvae, is expressed in neurons of the dorsal and posterior pharyngeal sense organs. Expressed in taste neurons that mediate sensitivity to bitter compounds.

The protein localises to the cell membrane. In terms of biological role, probable gustatory receptor which mediates acceptance or avoidance behavior, depending on its substrates. Seems to be involved in the sensing of bitter taste since it is expressed in neurons that mediate sensitivity to bitter compounds. The polypeptide is Putative gustatory receptor 22b (Drosophila melanogaster (Fruit fly)).